Consider the following 331-residue polypeptide: Beta-ketoacyl-[acyl-carrier-protein] synthase III (331 aa).

Catalysis depends on residues Cys115 and His255. The interval 256 to 260 (QANFR) is ACP-binding. Asn285 is an active-site residue.

Belongs to the thiolase-like superfamily. FabH family. As to quaternary structure, homodimer.

The protein resides in the cytoplasm. The enzyme catalyses malonyl-[ACP] + acetyl-CoA + H(+) = 3-oxobutanoyl-[ACP] + CO2 + CoA. It functions in the pathway lipid metabolism; fatty acid biosynthesis. Its function is as follows. Catalyzes the condensation reaction of fatty acid synthesis by the addition to an acyl acceptor of two carbons from malonyl-ACP. Catalyzes the first condensation reaction which initiates fatty acid synthesis and may therefore play a role in governing the total rate of fatty acid production. Possesses both acetoacetyl-ACP synthase and acetyl transacylase activities. Its substrate specificity determines the biosynthesis of branched-chain and/or straight-chain of fatty acids. This chain is Beta-ketoacyl-[acyl-carrier-protein] synthase III, found in Helicobacter pylori (strain ATCC 700392 / 26695) (Campylobacter pylori).